A 447-amino-acid polypeptide reads, in one-letter code: Rab GDP dissociation inhibitor alpha (447 aa).

This sequence belongs to the Rab GDI family. As to quaternary structure, interacts with RHOH. Interacts with the non-phosphorylated forms of RAB1A, RAB3A, RAB5A, RAB5B, RAB5C, RAB8A, RAB8B, RAB10, RAB12, RAB35, and RAB43.

It is found in the cytoplasm. The protein localises to the golgi apparatus. The protein resides in the trans-Golgi network. Regulates the GDP/GTP exchange reaction of most Rab proteins by inhibiting the dissociation of GDP from them, and the subsequent binding of GTP to them. Promotes the dissociation of GDP-bound Rab proteins from the membrane and inhibits their activation. Promotes the dissociation of RAB1A, RAB3A, RAB5A and RAB10 from membranes. The sequence is that of Rab GDP dissociation inhibitor alpha (GDI1) from Pongo pygmaeus (Bornean orangutan).